Consider the following 374-residue polypeptide: Chaperone protein DnaJ (374 aa).

A J domain is found at 5–70 (CYYEILNVSK…GKRSRYDQFG (66 aa)). A CR-type zinc finger spans residues 130-207 (GVEKEINIPR…CYGSGKIKKQ (78 aa)). Zn(2+) is bound by residues Cys-143, Cys-146, Cys-159, Cys-162, Cys-181, Cys-184, Cys-195, and Cys-198. 4 CXXCXGXG motif repeats span residues 143-150 (CDSCDGTG), 159-166 (CHACHGQG), 181-188 (CPVCNGTG), and 195-202 (CDDCYGSG).

Belongs to the DnaJ family. In terms of assembly, homodimer. Zn(2+) is required as a cofactor.

The protein resides in the cytoplasm. Its function is as follows. Participates actively in the response to hyperosmotic and heat shock by preventing the aggregation of stress-denatured proteins and by disaggregating proteins, also in an autonomous, DnaK-independent fashion. Unfolded proteins bind initially to DnaJ; upon interaction with the DnaJ-bound protein, DnaK hydrolyzes its bound ATP, resulting in the formation of a stable complex. GrpE releases ADP from DnaK; ATP binding to DnaK triggers the release of the substrate protein, thus completing the reaction cycle. Several rounds of ATP-dependent interactions between DnaJ, DnaK and GrpE are required for fully efficient folding. Also involved, together with DnaK and GrpE, in the DNA replication of plasmids through activation of initiation proteins. This Francisella philomiragia subsp. philomiragia (strain ATCC 25017 / CCUG 19701 / FSC 153 / O#319-036) protein is Chaperone protein DnaJ.